Consider the following 157-residue polypeptide: MKAVFSGSFDPITLGHVDIVTRAAELIDEVVVGVAVNSAKNGIFSMDERVAFVKDAVADIPGVEVALVDGLLVDFCTEMGADAIIRGLRFGGDFDYELQMAHLNKAMSGIETILLPAGREFGTISSSMIRSAACNGGNVSEFVPGMVNTALHERFPH.

Residue Ser8 coordinates substrate. Residues 8 to 9 (SF) and His16 contribute to the ATP site. Residues Lys40, Leu72, and Arg86 each coordinate substrate. Residues 87-89 (GLR), Glu97, and 121-127 (FGTISSS) contribute to the ATP site.

It belongs to the bacterial CoaD family. Homohexamer. The cofactor is Mg(2+).

Its subcellular location is the cytoplasm. The catalysed reaction is (R)-4'-phosphopantetheine + ATP + H(+) = 3'-dephospho-CoA + diphosphate. Its pathway is cofactor biosynthesis; coenzyme A biosynthesis; CoA from (R)-pantothenate: step 4/5. Reversibly transfers an adenylyl group from ATP to 4'-phosphopantetheine, yielding dephospho-CoA (dPCoA) and pyrophosphate. This is Phosphopantetheine adenylyltransferase from Cutibacterium acnes (strain DSM 16379 / KPA171202) (Propionibacterium acnes).